Here is a 160-residue protein sequence, read N- to C-terminus: Nascent polypeptide-associated complex subunit beta (160 aa).

2 disordered regions span residues 16–36 (GGKG…GTDD) and 118–160 (ESYQ…TEVE). Basic residues predominate over residues 20–30 (TPRRKVKKVHK). Residues 33-98 (GTDDKKLQTA…GEDKELTELV (66 aa)) enclose the NAC-A/B domain. Positions 124 to 134 (QKEKGEDGDKK) are enriched in basic and acidic residues. Acidic residues predominate over residues 135–145 (DDDDEDDDDIP).

The protein belongs to the NAC-beta family. In terms of assembly, part of the nascent polypeptide-associated complex (NAC), consisting of EGD2 and EGD1. NAC associates with ribosomes via EGD1.

The protein resides in the cytoplasm. The protein localises to the nucleus. In terms of biological role, component of the nascent polypeptide-associated complex (NAC), a dynamic component of the ribosomal exit tunnel, protecting the emerging polypeptides from interaction with other cytoplasmic proteins to ensure appropriate nascent protein targeting. The NAC complex also promotes mitochondrial protein import by enhancing productive ribosome interactions with the outer mitochondrial membrane and blocks the inappropriate interaction of ribosomes translating non-secretory nascent polypeptides with translocation sites in the membrane of the endoplasmic reticulum. EGD1 may act as a transcription factor that exert a negative effect on the expression of several genes that are transcribed by RNA polymerase II. In Phaeosphaeria nodorum (strain SN15 / ATCC MYA-4574 / FGSC 10173) (Glume blotch fungus), this protein is Nascent polypeptide-associated complex subunit beta (EGD1).